A 186-amino-acid chain; its full sequence is RNA polymerase sigma factor NccH (186 aa).

A Polymerase core binding motif is present at residues 49–62 (DIVQDTFIAAWHAL). The H-T-H motif DNA-binding region spans 152-171 (HPEAAMALGTSAKAVESRVA).

The protein belongs to the sigma-70 factor family. ECF subfamily.

Functionally, sigma factors are initiation factors that promote the attachment of RNA polymerase to specific initiation sites and are then released. This sigma factor regulates the genes for a membrane-located efflux system that confers resistance to nickel, cobalt and cadmium. This Alcaligenes xylosoxydans xylosoxydans (Achromobacter xylosoxidans) protein is RNA polymerase sigma factor NccH (nccH).